The sequence spans 307 residues: Low-salt glycan biosynthesis hexosyltransferase Agl10 (307 aa).

The protein belongs to the glycosyltransferase 2 family.

The protein operates within protein modification; protein glycosylation. It functions in the pathway cell surface structure biogenesis; S-layer biogenesis. In terms of biological role, hexosyltransferase involved in N-glycan biosynthetic pathway that takes place under low-salt conditions (1.75 M instead of 3.4 M). Participates in the formation of the tetrasaccharide present at 'Asn-532' of S-layer glycoprotein Csg, consisting of a sulfated hexose, 2 hexoses and rhamnose. Involved in the addition of final rhamnose (sugar 4) of the tetrasaccharide on the dolichol phosphate carrier. This Haloferax volcanii (strain ATCC 29605 / DSM 3757 / JCM 8879 / NBRC 14742 / NCIMB 2012 / VKM B-1768 / DS2) (Halobacterium volcanii) protein is Low-salt glycan biosynthesis hexosyltransferase Agl10 (agl10).